The chain runs to 540 residues: Serine/threonine-protein phosphatase ppzA (540 aa).

2 disordered regions span residues 1-108 (MGQS…KRGH) and 120-140 (VDHV…STQK). Composition is skewed to polar residues over residues 15–24 (SLQSYPSFSR) and 45–54 (SDSPRGSTAG). The segment covering 62 to 88 (AASVKSTTSRRSSTNQSVQSPDDTPSQ) has biased composition (low complexity). Positions 89 to 98 (PDAPEPPPSP) are enriched in pro residues. Residues 127 to 136 (PPTGAAPTGP) show a composition bias toward low complexity. Residues Asp-239, His-241, Asp-267, and Asn-299 each coordinate Mn(2+). A Phosphatase tensin-type domain is found at 258-540 (PASNYLFLGD…SLVTSWGISR (283 aa)). The active-site Proton donor is His-300. Mn(2+) contacts are provided by His-348 and His-423.

It belongs to the PPP phosphatase family. PP-Z subfamily. Interacts with at least 54 proteins, of which 31 are detected only after iron starvation and 22 are detected only in control conditions. Only the regulatory subunit of the protein phosphatase PP1 (Afu1g04800/AFUB_005140) interacts with ppzA in both conditions. Mn(2+) is required as a cofactor.

The protein localises to the cytoplasm. The catalysed reaction is O-phospho-L-seryl-[protein] + H2O = L-seryl-[protein] + phosphate. The enzyme catalyses O-phospho-L-threonyl-[protein] + H2O = L-threonyl-[protein] + phosphate. Its function is as follows. Catalytic subunit of protein phosphatase Z (PPZ) involved in iron assimilation. Regulates secondary metabolites production, including gliotoxin, pyripyropene A, fumagillin, fumiquinazoline A, triacetyl-fusarinine C, and helvolic acid. Plays a key role in pathogenicity. This is Serine/threonine-protein phosphatase ppzA from Aspergillus fumigatus (strain CBS 144.89 / FGSC A1163 / CEA10) (Neosartorya fumigata).